The following is a 173-amino-acid chain: uncharacterized protein (173 aa).

3 helical membrane-spanning segments follow: residues 24–44 (VAFI…WLFF), 82–102 (YILF…SYFI), and 135–155 (LIKR…ILFS).

It localises to the cell membrane. This is an uncharacterized protein from Rickettsia prowazekii (strain Madrid E).